The following is a 515-amino-acid chain: Cytochrome P450 monooxygenase nsrP (515 aa).

A helical membrane pass occupies residues 20-40 (FGTAAFLAVLLSALAFLSYTP). N-linked (GlcNAc...) asparagine glycosylation is found at Asn84, Asn406, and Asn411. Cys452 serves as a coordination point for heme.

This sequence belongs to the cytochrome P450 family. Requires heme as cofactor.

The protein resides in the membrane. It functions in the pathway secondary metabolite biosynthesis. Cytochrome P450 monooxygenase; part of the gene cluster that mediates the biosynthesis of the tetrahydroxanthone dimer neosartorin, which exhibits antibacterial activity. The two different monomeric units appear to be synthesized by the same set of enzymes, among which the Baeyer-Villiger monooxygenase nsrF is the key enzyme for the divergence of the biosynthetic routes. The pathway begins with the synthesis of atrochrysone thioester by the polyketide synthase nsrB. The atrochrysone carboxyl ACP thioesterase nsrC then breaks the thioester bond and releases the atrochrysone carboxylic acid from AacuL. Atrochrysone carboxylic acid is decarboxylated by the decarboxylase nsrE, and oxidized by the anthrone oxygenase nsrD to yield emodin. Emodin is then reduced to emodin hydroquinone by the oxidoreductase nsrR. A-ring reduction by the short chain dehydrogenase nsrJ, dehydration by the scytalone dehydratase-like protein nsrI and probable spontaneous re-oxidation, results in overall deoxygenation to chrysophanol. The Baeyer-Villiger monooxygenase nsrF accepts chrysophanol as a substrate to insert one oxygen atom at two different positions to yield the precursors of both monomric units. NsrF is promiscuous/flexible in interacting with the 2 (non methylated and methylated) aromatic rings of chrysophanol, thus diverging the biosynthetic pathway at this point. After the hydrolysis of the lactones, methylesterification by the methyltransferase nsrG yields respectively moniliphenone and 2,2',6'-trihydroxy-4-methyl-6-methoxya-cyldiphenylmethanone. The next steps are the hydroxylation by the FAD-dependent monooxygenase nsrK, followed by isomerization by the monooxygenase nsrQ. The short chain dehydrogenase/reductase nsrO then catalyzes the C-5 ketoreduction to give the xanthone skeleton of blennolide C and 5-acetylblennolide A. The acetyltransferase nsrL has a strict substrate specificity and uses only blennolide A but not blennolide C to yield 5-acetylblennolide A as the single-acetylated product. In the final step of the biosynthesis, the heterodimerization of the 2 xanthones, blennolide C and 5-acetylblennolide A, is catalyzed by the cytochrome P450 monooxygenase nsrP. NsrP can utilize at least three different xanthones as its substrates to perform the dimerization reaction. In Aspergillus novofumigatus (strain IBT 16806), this protein is Cytochrome P450 monooxygenase nsrP.